A 299-amino-acid chain; its full sequence is 4-hydroxy-tetrahydrodipicolinate synthase (299 aa).

Residue threonine 47 coordinates pyruvate. Residue tyrosine 136 is the Proton donor/acceptor of the active site. Lysine 164 (schiff-base intermediate with substrate) is an active-site residue. Alanine 205 contacts pyruvate.

The protein belongs to the DapA family. Homotetramer; dimer of dimers.

It localises to the cytoplasm. It catalyses the reaction L-aspartate 4-semialdehyde + pyruvate = (2S,4S)-4-hydroxy-2,3,4,5-tetrahydrodipicolinate + H2O + H(+). The protein operates within amino-acid biosynthesis; L-lysine biosynthesis via DAP pathway; (S)-tetrahydrodipicolinate from L-aspartate: step 3/4. In terms of biological role, catalyzes the condensation of (S)-aspartate-beta-semialdehyde [(S)-ASA] and pyruvate to 4-hydroxy-tetrahydrodipicolinate (HTPA). This is 4-hydroxy-tetrahydrodipicolinate synthase from Pediococcus pentosaceus (strain ATCC 25745 / CCUG 21536 / LMG 10740 / 183-1w).